The primary structure comprises 112 residues: 87 kDa annexin-binding protein (112 aa).

Binds annexin.

The sequence is that of 87 kDa annexin-binding protein from Physarum polycephalum (Slime mold).